The following is a 366-amino-acid chain: tRNA/tmRNA (uracil-C(5))-methyltransferase (366 aa).

Q187, Y215, N220, E236, and D297 together coordinate S-adenosyl-L-methionine. The active-site Nucleophile is C322. E356 (proton acceptor) is an active-site residue.

This sequence belongs to the class I-like SAM-binding methyltransferase superfamily. RNA M5U methyltransferase family. TrmA subfamily.

The enzyme catalyses uridine(54) in tRNA + S-adenosyl-L-methionine = 5-methyluridine(54) in tRNA + S-adenosyl-L-homocysteine + H(+). It catalyses the reaction uridine(341) in tmRNA + S-adenosyl-L-methionine = 5-methyluridine(341) in tmRNA + S-adenosyl-L-homocysteine + H(+). Its function is as follows. Dual-specificity methyltransferase that catalyzes the formation of 5-methyluridine at position 54 (m5U54) in all tRNAs, and that of position 341 (m5U341) in tmRNA (transfer-mRNA). The sequence is that of tRNA/tmRNA (uracil-C(5))-methyltransferase from Marinomonas sp. (strain MWYL1).